A 262-amino-acid polypeptide reads, in one-letter code: 5-methyltetrahydrofolate:corrinoid/iron-sulfur protein co-methyltransferase (262 aa).

The Pterin-binding domain maps to 1 to 246 (MLIIGERING…ETAATAEILL (246 aa)). Asn-96 and Asp-160 together coordinate (6S)-5-methyl-5,6,7,8-tetrahydrofolate. A Ca(2+)-binding site is contributed by Lys-184. Residues Asn-199, Gln-202, and Arg-207 each coordinate (6S)-5-methyl-5,6,7,8-tetrahydrofolate. Residue 202 to 203 (QN) coordinates methylcob(III)alamin. Ca(2+) is bound by residues Gly-222 and Asp-224.

It belongs to the vitamin-B12 dependent methionine synthase family. As to quaternary structure, heterohexamer composed of 2 subunits of AcsC, 2 subunits of AcsD and 2 subunits of AcsE. Requires Ca(2+) as cofactor.

The catalysed reaction is methyl-Co(III)-[corrinoid Fe-S protein] + (6S)-5,6,7,8-tetrahydrofolate = Co(I)-[corrinoid Fe-S protein] + (6S)-5-methyl-5,6,7,8-tetrahydrofolate + H(+). Methyltransferase that mediates the transfer of a N5-methyl group of (6S)-methyltetrahydrofolate to the 5-methoxybenzimidazolylcobamide cofactor of a corrinoid/Fe-S protein (AcsC/AcsD) in the anaerobic acetyl-CoA pathway (Wood-Ljungdahl pathway) of carbon monoxide and carbon dioxide fixation. This Moorella thermoacetica (Clostridium thermoaceticum) protein is 5-methyltetrahydrofolate:corrinoid/iron-sulfur protein co-methyltransferase (acsE).